The following is a 158-amino-acid chain: Protein Smg homolog (158 aa).

This sequence belongs to the Smg family.

The chain is Protein Smg homolog from Shewanella sp. (strain MR-4).